Reading from the N-terminus, the 491-residue chain is Acetyl-coenzyme A carboxylase carboxyl transferase subunit beta, chloroplastic (491 aa).

The 263-residue stretch at 229–491 (LWVQCENCYG…FQLHGFFPLT (263 aa)) folds into the CoA carboxyltransferase N-terminal domain. 4 residues coordinate Zn(2+): Cys-233, Cys-236, Cys-252, and Cys-255. A C4-type zinc finger spans residues 233–255 (CENCYGLNYKQFFRSRLNICEHC).

It belongs to the AccD/PCCB family. In terms of assembly, acetyl-CoA carboxylase is a heterohexamer composed of biotin carboxyl carrier protein, biotin carboxylase and 2 subunits each of ACCase subunit alpha and ACCase plastid-coded subunit beta (accD). Requires Zn(2+) as cofactor.

Its subcellular location is the plastid. It is found in the chloroplast stroma. The enzyme catalyses N(6)-carboxybiotinyl-L-lysyl-[protein] + acetyl-CoA = N(6)-biotinyl-L-lysyl-[protein] + malonyl-CoA. The protein operates within lipid metabolism; malonyl-CoA biosynthesis; malonyl-CoA from acetyl-CoA: step 1/1. Its function is as follows. Component of the acetyl coenzyme A carboxylase (ACC) complex. Biotin carboxylase (BC) catalyzes the carboxylation of biotin on its carrier protein (BCCP) and then the CO(2) group is transferred by the transcarboxylase to acetyl-CoA to form malonyl-CoA. The chain is Acetyl-coenzyme A carboxylase carboxyl transferase subunit beta, chloroplastic from Lemna minor (Common duckweed).